Here is a 289-residue protein sequence, read N- to C-terminus: uncharacterized protein (289 aa).

The interval 25 to 66 (GGSGDSQSAHTPSTSIHTQNNSTPNKNTSTPPVNVSNANNLE) is disordered. Over residues 33 to 43 (AHTPSTSIHTQ) the composition is skewed to polar residues. Residues 44–59 (NNSTPNKNTSTPPVNV) are compositionally biased toward low complexity.

This is an uncharacterized protein from Haemophilus influenzae (strain ATCC 51907 / DSM 11121 / KW20 / Rd).